Reading from the N-terminus, the 46-residue chain is Defensin-1 (46 aa).

Intrachain disulfides connect C3/C46, C14/C35, C20/C40, and C24/C42.

It belongs to the DEFL family. As to expression, epidermis and vascular bundles of pods, stems, roots, leaves and wet or dry seeds.

Its function is as follows. Possesses antifungal activity sensitive to inorganic cations. In Pisum sativum (Garden pea), this protein is Defensin-1.